The following is a 482-amino-acid chain: Ras GTPase-activating protein-binding protein 2 (482 aa).

The NTF2 domain maps to 11–133 (VGREFVRQYY…FYVHNDMFRY (123 aa)). Acidic residues predominate over residues 140–158 (DSEPELDEESEDEVEEEQE). Disordered stretches follow at residues 140–170 (DSEP…VQEN) and 187–318 (EPLE…EQND). Phosphoserine occurs at positions 141, 149, and 225. The interval 142–220 (EPELDEESED…PQVEEKHLEE (79 aa)) is acidic disordered region. Positions 191–225 (ESSHEPEPEPESETKTEELKPQVEEKHLEELEEKS) are enriched in basic and acidic residues. The residue at position 227 (threonine 227) is a Phosphothreonine. Over residues 247–264 (ASVTSKNLPPSGTVSSSG) the composition is skewed to polar residues. A Glycyl lysine isopeptide (Lys-Gly) (interchain with G-Cter in SUMO2) cross-link involves residue lysine 281. Positions 290–300 (RVREQRPRERP) are enriched in basic and acidic residues. Residues 331-409 (HQLFVGNLPH…VRLNVEEKKT (79 aa)) form the RRM domain. The residue at position 392 (lysine 392) is an N6-succinyllysine. Residues 404-476 (VEEKKTRAAR…GRGTGQMEGR (73 aa)) are RG-rich region. Positions 408 to 432 (KTRAARERETRGGGDDRRDIRRNDR) are enriched in basic and acidic residues. The tract at residues 408 to 482 (KTRAARERET…MEGRFTGQRR (75 aa)) is disordered. A compositionally biased stretch (gly residues) spans 433-445 (GPGGPRGIVGGGM). An Omega-N-methylarginine modification is found at arginine 457. At serine 466 the chain carries Phosphoserine. Arginine 468 is subject to Omega-N-methylarginine.

In terms of assembly, forms homooligomers. Forms heterodimers with G3BP1. Interacts with NFKBIA (via N-terminus). Interacts (via NTF2 domain) with USP10; inhibiting stress granule formation. Interacts (via NTF2 domain) with CAPRIN1; promoting stress granule formation. Associates (via RG-rich region) with 40S ribosome subunits. Interacts with PABPC1.

Its subcellular location is the cytoplasm. The protein localises to the stress granule. Its activity is regulated as follows. Under physiological conditions, G3BP2 adopts a compact state that is stabilized by intramolecular interactions between the RG-rich and the acidic regions that inhibit phase separation. Upon stress, polysomes disassemble and mRNAs are released in an unfolded protein-free state. Binding of unfolded mRNA to G3BP2 outcompetes the intramolecular interactions and RNA-bound G3BP2 adopts an expanded conformation in which the RG-rich region becomes exposed to engage in protein-protein and protein-RNA interactions, allowing physical cross-linking of RNA molecules to form protein-RNA condensates, leading to liquid-liquid phase separation (LLPS). Scaffold protein that plays an essential role in cytoplasmic stress granule formation which acts as a platform for antiviral signaling. Plays an essential role in stress granule formation. Stress granules are membraneless compartments that store mRNAs and proteins, such as stalled translation pre-initiation complexes, in response to stress. Promotes formation of stress granules phase-separated membraneless compartment by undergoing liquid-liquid phase separation (LLPS) upon unfolded RNA-binding: functions as a molecular switch that triggers RNA-dependent LLPS in response to a rise in intracellular free RNA concentrations. The sequence is that of Ras GTPase-activating protein-binding protein 2 (G3bp2) from Mus musculus (Mouse).